The sequence spans 424 residues: Elongation factor Tu, mitochondrial (424 aa).

In terms of domain architecture, tr-type G spans 36 to 234; it reads KPHVNVGTIG…VLDTKIPLPH (199 aa). Residues 45–52 form a G1 region; it reads GHVDHGKT. 45-52 is a binding site for GTP; the sequence is GHVDHGKT. Residues 86–90 are G2; sequence GITIT. The G3 stretch occupies residues 107–110; the sequence is DCPG. Residues 107–111 and 162–165 each bind GTP; these read DCPGH and NKMD. A G4 region spans residues 162–165; the sequence is NKMD. The G5 stretch occupies residues 199–201; sequence AAA.

This sequence belongs to the TRAFAC class translation factor GTPase superfamily. Classic translation factor GTPase family. EF-Tu/EF-1A subfamily.

The protein localises to the mitochondrion. Its function is as follows. This protein promotes the GTP-dependent binding of aminoacyl-tRNA to the A-site of ribosomes during protein biosynthesis. This Dictyostelium discoideum (Social amoeba) protein is Elongation factor Tu, mitochondrial (tufm).